A 359-amino-acid chain; its full sequence is Phosphoribosylformylglycinamidine cyclo-ligase (359 aa).

The protein belongs to the AIR synthase family.

It is found in the cytoplasm. The catalysed reaction is 2-formamido-N(1)-(5-O-phospho-beta-D-ribosyl)acetamidine + ATP = 5-amino-1-(5-phospho-beta-D-ribosyl)imidazole + ADP + phosphate + H(+). Its pathway is purine metabolism; IMP biosynthesis via de novo pathway; 5-amino-1-(5-phospho-D-ribosyl)imidazole from N(2)-formyl-N(1)-(5-phospho-D-ribosyl)glycinamide: step 2/2. The sequence is that of Phosphoribosylformylglycinamidine cyclo-ligase from Brucella canis (strain ATCC 23365 / NCTC 10854 / RM-666).